A 338-amino-acid polypeptide reads, in one-letter code: Cap-specific mRNA (nucleoside-2'-O-)-methyltransferase (338 aa).

Position 22 (Tyr22) interacts with mRNA. S-adenosyl-L-methionine is bound by residues Gln39, Tyr66, Gly68, Gly72, Asp95, Arg97, Val116, and Asp138. Residues 169–249 (PAASSLKWRC…NKIIRNRIII (81 aa)) form a binding to NPH-I region. Residues 169–333 (PAASSLKWRC…NTKKSVRGNK (165 aa)) form a binding to Rap94 region. The active-site For methyltransferase activity is the Lys175. Residues 177–180 (RCPF), Asp182, 205–207 (SAE), and Glu233 contribute to the mRNA site. The segment at 305–338 (HHEPTQRKVPSKNTMLKSRNTKKSVRGNKQGRRT) is disordered. The segment covering 323-338 (RNTKKSVRGNKQGRRT) has biased composition (basic residues).

It belongs to the class I-like SAM-binding methyltransferase superfamily. Poxvirus/kinetoplastid 2'-O-MTase family. In terms of assembly, interacts with poly(A) polymerase catalytic subunit OPG063. Interacts with OPG109 and OPG123; these interactions might help linking transcription to capping and polyadenylation.

The protein resides in the virion. The catalysed reaction is a 5'-end (N(7)-methyl 5'-triphosphoguanosine)-ribonucleoside in mRNA + S-adenosyl-L-methionine = a 5'-end (N(7)-methyl 5'-triphosphoguanosine)-(2'-O-methyl-ribonucleoside) in mRNA + S-adenosyl-L-homocysteine + H(+). Functionally, displays methyltransferase, positive regulation of the poly(A) polymerase and transcription elongation activities. Involved in the modification of both mRNA ends and in intermediate and late gene positive transcription elongation. At the mRNAs 5' end, methylates the ribose 2' OH group of the first transcribed nucleotide, thereby producing a 2'-O-methylpurine cap. At the 3' end, functions as a processivity factor which stimulates the activity of the viral poly(A) polymerase OPG063 that creates mRNA's poly(A) tail. In the presence of OPG102, OPG063 does not dissociate from the RNA allowing tail elongation to around 250 adenylates. The sequence is that of Cap-specific mRNA (nucleoside-2'-O-)-methyltransferase (OPG102) from Oryctolagus cuniculus (Rabbit).